The following is a 461-amino-acid chain: Pup--protein ligase (461 aa).

E9 contributes to the Mg(2+) binding site. Residue R53 participates in ATP binding. A Mg(2+)-binding site is contributed by Y55. D57 serves as the catalytic Proton acceptor. E63 is a Mg(2+) binding site. ATP contacts are provided by T66 and W420.

Belongs to the Pup ligase/Pup deamidase family. Pup-conjugating enzyme subfamily.

It carries out the reaction ATP + [prokaryotic ubiquitin-like protein]-L-glutamate + [protein]-L-lysine = ADP + phosphate + N(6)-([prokaryotic ubiquitin-like protein]-gamma-L-glutamyl)-[protein]-L-lysine.. It participates in protein degradation; proteasomal Pup-dependent pathway. The protein operates within protein modification; protein pupylation. In terms of biological role, catalyzes the covalent attachment of the prokaryotic ubiquitin-like protein modifier Pup to the proteasomal substrate proteins, thereby targeting them for proteasomal degradation. This tagging system is termed pupylation. The ligation reaction involves the side-chain carboxylate of the C-terminal glutamate of Pup and the side-chain amino group of a substrate lysine. In Renibacterium salmoninarum (strain ATCC 33209 / DSM 20767 / JCM 11484 / NBRC 15589 / NCIMB 2235), this protein is Pup--protein ligase.